We begin with the raw amino-acid sequence, 547 residues long: Nuclear speckle splicing regulatory protein 1 (547 aa).

The tract at residues 25-51 (KPSVFGNDSDDDEASVSESLQREAAKK) is disordered. Phosphoserine is present on residues S27 and S33. Positions 103-177 (IHNLLKAVEI…EARLDVTKQK (75 aa)) form a coiled coil. The segment at 105-169 (NLLKAVEIRK…REKRAAALEA (65 aa)) is necessary for alternative splicing activity. A disordered region spans residues 188 to 523 (NQAVGEEAVP…KRSNEETVMS (336 aa)). Residues K198 and K209 each participate in a glycyl lysine isopeptide (Lys-Gly) (interchain with G-Cter in SUMO2) cross-link. Residues 200–217 (SFREARTVIKEEKLRGYP) are compositionally biased toward basic and acidic residues. Polar residues predominate over residues 223 to 232 (ENRPQQNCAL). The segment covering 237–254 (EEAEENPDADSDSEESCD) has biased composition (acidic residues). S247 and S252 each carry phosphoserine. The span at 255-269 (DGERGDHKVKSRGEE) shows a compositional bias: basic and acidic residues. Position 276 is an N6-acetyllysine (K276). Residues 277 to 287 (YLKHHKNHTHS) are compositionally biased toward basic residues. K279 participates in a covalent cross-link: Glycyl lysine isopeptide (Lys-Gly) (interchain with G-Cter in SUMO2). Residues 308 to 339 (RGHEHKGGQHQDRQSRDQESCHKDRSHREEKS) show a composition bias toward basic and acidic residues. Residues 340–355 (SHRHREASHKDHHWKR) are compositionally biased toward basic residues. Composition is skewed to basic and acidic residues over residues 356 to 480 (HEHE…KPPR) and 490 to 506 (RLTE…ERPP). Residues 376–417 (KREKYSSREQEKDRQWNDHDRYSEKEKKGKEKEEHRKARRER) adopt a coiled-coil conformation. The residue at position 447 (S447) is a Phosphoserine.

Belongs to the NSRP1 family. As to quaternary structure, interacts (via C-terminus) with SRSF1. Interacts (via C-terminus) with SRSF2.

The protein resides in the nucleus. The protein localises to the nucleus speckle. Its function is as follows. RNA-binding protein that mediates pre-mRNA alternative splicing regulation. The sequence is that of Nuclear speckle splicing regulatory protein 1 (Nsrp1) from Rattus norvegicus (Rat).